We begin with the raw amino-acid sequence, 246 residues long: NAD-dependent protein deacylase (246 aa).

The Deacetylase sirtuin-type domain maps to 1–237 (MSLPYRHVVI…PRLVEEILAA (237 aa)). 13 to 32 (GAGISAESGIQTFRAQDGLW) contacts NAD(+). Substrate contacts are provided by Tyr-57 and Arg-60. Residue 94–97 (QNID) participates in NAD(+) binding. His-112 serves as the catalytic Proton acceptor. The Zn(2+) site is built by Cys-120 and Cys-139. Residues 179 to 181 (GTS), 205 to 207 (NLE), and Ala-223 each bind NAD(+).

The protein belongs to the sirtuin family. Class III subfamily. The cofactor is Zn(2+).

It localises to the cytoplasm. The enzyme catalyses N(6)-acetyl-L-lysyl-[protein] + NAD(+) + H2O = 2''-O-acetyl-ADP-D-ribose + nicotinamide + L-lysyl-[protein]. It carries out the reaction N(6)-succinyl-L-lysyl-[protein] + NAD(+) + H2O = 2''-O-succinyl-ADP-D-ribose + nicotinamide + L-lysyl-[protein]. NAD-dependent lysine deacetylase and desuccinylase that specifically removes acetyl and succinyl groups on target proteins. Modulates the activities of several proteins which are inactive in their acylated form. In Vibrio cholerae serotype O1 (strain ATCC 39315 / El Tor Inaba N16961), this protein is NAD-dependent protein deacylase.